The following is a 353-amino-acid chain: Uroporphyrinogen decarboxylase (353 aa).

Residues 29 to 33 (RQAGR), Asp78, Tyr154, Ser209, and His322 contribute to the substrate site.

Belongs to the uroporphyrinogen decarboxylase family. Homodimer.

The protein resides in the cytoplasm. The catalysed reaction is uroporphyrinogen III + 4 H(+) = coproporphyrinogen III + 4 CO2. It participates in porphyrin-containing compound metabolism; protoporphyrin-IX biosynthesis; coproporphyrinogen-III from 5-aminolevulinate: step 4/4. Functionally, catalyzes the decarboxylation of four acetate groups of uroporphyrinogen-III to yield coproporphyrinogen-III. In Bacillus velezensis (strain DSM 23117 / BGSC 10A6 / LMG 26770 / FZB42) (Bacillus amyloliquefaciens subsp. plantarum), this protein is Uroporphyrinogen decarboxylase.